Reading from the N-terminus, the 330-residue chain is Stomatin-1 (330 aa).

The segment covering 1–19 (MQPSETVEMQEMAQPSGQQ) has biased composition (polar residues). Residues 1–27 (MQPSETVEMQEMAQPSGQQRDVEARVQ) are disordered. Residues 42–62 (MFCIAMSYVLIFLTFPVSVFM) form a helical membrane-spanning segment.

The protein belongs to the band 7/mec-2 family.

The protein localises to the membrane. This Caenorhabditis elegans protein is Stomatin-1 (sto-1).